The sequence spans 343 residues: GTPase Obg (343 aa).

One can recognise an Obg domain in the interval 1-157; the sequence is MKFIDEVSIS…IEVRLELKLI (157 aa). The tract at residues 13–44 is disordered; that stretch reads SGRGGPGCVSFRRESMQARGGPDGGNGGKGGD. Gly residues predominate over residues 33–43; it reads GPDGGNGGKGG. The OBG-type G domain maps to 158–338; that stretch reads ADVGIVGFPN…FVQELARQIL (181 aa). Residues 164 to 171, 189 to 193, 211 to 214, 290 to 293, and 319 to 321 contribute to the GTP site; these read GFPNAGKS, FTTLT, DIPG, NKID, and SAV. The Mg(2+) site is built by serine 171 and threonine 191.

It belongs to the TRAFAC class OBG-HflX-like GTPase superfamily. OBG GTPase family. Monomer. The cofactor is Mg(2+).

Its subcellular location is the cytoplasm. Functionally, an essential GTPase which binds GTP, GDP and possibly (p)ppGpp with moderate affinity, with high nucleotide exchange rates and a fairly low GTP hydrolysis rate. Plays a role in control of the cell cycle, stress response, ribosome biogenesis and in those bacteria that undergo differentiation, in morphogenesis control. In Bdellovibrio bacteriovorus (strain ATCC 15356 / DSM 50701 / NCIMB 9529 / HD100), this protein is GTPase Obg.